The chain runs to 207 residues: Ribosomal RNA large subunit methyltransferase E (207 aa).

S-adenosyl-L-methionine-binding residues include G56, W58, D76, D94, and D116. Catalysis depends on K156, which acts as the Proton acceptor.

The protein belongs to the class I-like SAM-binding methyltransferase superfamily. RNA methyltransferase RlmE family.

The protein resides in the cytoplasm. The enzyme catalyses uridine(2552) in 23S rRNA + S-adenosyl-L-methionine = 2'-O-methyluridine(2552) in 23S rRNA + S-adenosyl-L-homocysteine + H(+). In terms of biological role, specifically methylates the uridine in position 2552 of 23S rRNA at the 2'-O position of the ribose in the fully assembled 50S ribosomal subunit. In Desulfatibacillum aliphaticivorans, this protein is Ribosomal RNA large subunit methyltransferase E.